The sequence spans 359 residues: Fe-S cluster assembly protein DRE2 (359 aa).

Residues 1–148 (MASTGRVLLL…KPDVAAQQAV (148 aa)) are N-terminal SAM-like domain. Disordered stretches follow at residues 97 to 116 (NKAW…NDND) and 149 to 210 (PLKL…PSGV). Residues 149–246 (PLKLGRRKKE…EDELLGEDDM (98 aa)) are linker. The span at 152–164 (LGRRKKEKERRHP) shows a compositional bias: basic residues. The segment covering 167–183 (NDVTNGKVNAPSSNGVN) has biased composition (polar residues). Low complexity predominate over residues 184 to 200 (ASTSTATATATTTTTTT). The [2Fe-2S] cluster site is built by Cys256, Cys267, Cys270, and Cys272. The interval 256-272 (CRPKPGKRRRACKDCSC) is fe-S binding site A. Residues Cys322, Cys325, Cys333, and Cys336 each coordinate [4Fe-4S] cluster. 2 consecutive short sequence motifs (cx2C motif) follow at residues 322–325 (CGNC) and 333–336 (CDGC). Residues 322–336 (CGNCSLGDAFRCDGC) form a fe-S binding site B region.

It belongs to the anamorsin family. Monomer. Interacts with TAH18. Interacts with MIA40. Requires [2Fe-2S] cluster as cofactor. It depends on [4Fe-4S] cluster as a cofactor.

It is found in the cytoplasm. It localises to the mitochondrion intermembrane space. Component of the cytosolic iron-sulfur (Fe-S) protein assembly (CIA) machinery required for the maturation of extramitochondrial Fe-S proteins. Part of an electron transfer chain functioning in an early step of cytosolic Fe-S biogenesis, facilitating the de novo assembly of a [4Fe-4S] cluster on the scaffold complex CFD1-NBP35. Electrons are transferred to DRE2 from NADPH via the FAD- and FMN-containing protein TAH18. TAH18-DRE2 are also required for the assembly of the diferric tyrosyl radical cofactor of ribonucleotide reductase (RNR), probably by providing electrons for reduction during radical cofactor maturation in the catalytic small subunit RNR2. The protein is Fe-S cluster assembly protein DRE2 of Blastomyces gilchristii (strain SLH14081) (Blastomyces dermatitidis).